A 1517-amino-acid chain; its full sequence is Neurite extension and migration factor (1517 aa).

A compositionally biased stretch (basic and acidic residues) spans 381-405; the sequence is DKKKGKEEVHEDKSIEKKDEKDNGE. Disordered stretches follow at residues 381–416, 505–529, 644–697, 732–775, 1065–1084, 1161–1228, and 1372–1422; these read DKKK…PCSG, VNER…PKKR, SMEA…GLIG, KKIK…HMSE, RHSS…SPQS, DEPA…KKGK, and AGTP…SSED. The span at 644-663 shows a compositional bias: polar residues; it reads SMEASASSKQVSFGSDQKQA. The segment covering 678 to 687 has biased composition (low complexity); it reads SALLAAPSSA. Residues 764 to 773 show a composition bias toward polar residues; it reads TPGTSNSSHM.

The protein resides in the nucleus. It localises to the cytoplasm. Involved in neurite outgrowth by regulating cell-cell adhesion via the N-cadherin signaling pathway. May act by regulating expression of protein-coding genes, such as N-cadherins and integrin beta-1 (ITGB1). This is Neurite extension and migration factor from Rattus norvegicus (Rat).